We begin with the raw amino-acid sequence, 105 residues long: Heat shock protein HspQ (105 aa).

The protein belongs to the HspQ family.

The protein resides in the cytoplasm. In terms of biological role, involved in the degradation of certain denaturated proteins, including DnaA, during heat shock stress. The sequence is that of Heat shock protein HspQ from Blochmanniella floridana.